A 658-amino-acid polypeptide reads, in one-letter code: Threonine--tRNA ligase (658 aa).

In terms of domain architecture, TGS spans 1 to 64 (MSNTVSLQFP…GASGKLEIIT (64 aa)). Positions 246 to 548 (DHRRLGREMD…LIENFAGHMP (303 aa)) are catalytic. Positions 343, 394, and 525 each coordinate Zn(2+).

The protein belongs to the class-II aminoacyl-tRNA synthetase family. In terms of assembly, homodimer. It depends on Zn(2+) as a cofactor.

The protein localises to the cytoplasm. It catalyses the reaction tRNA(Thr) + L-threonine + ATP = L-threonyl-tRNA(Thr) + AMP + diphosphate + H(+). In terms of biological role, catalyzes the attachment of threonine to tRNA(Thr) in a two-step reaction: L-threonine is first activated by ATP to form Thr-AMP and then transferred to the acceptor end of tRNA(Thr). Also edits incorrectly charged L-seryl-tRNA(Thr). The polypeptide is Threonine--tRNA ligase (Brucella abortus (strain S19)).